A 424-amino-acid chain; its full sequence is Arginine ADP-riboxanase OspC4 (424 aa).

Positions 85, 86, 87, 91, 104, 114, 130, 148, 153, 173, and 268 each coordinate NAD(+). The active site involves Glu268. 3 ANK repeats span residues 311 to 340 (MAHQALAYSLGNKKADIALYLLSKFNFTKQ), 355 to 386 (NLYDVEYLLSKDGANYKVLEYFINNGLVDVNK), and 393 to 422 (SGDTMLDNAMKSKDSKMIDFFIKKWSGIRQ).

The protein belongs to the OspC family.

It localises to the secreted. The protein localises to the host cytoplasm. It catalyses the reaction L-arginyl-[protein] + NAD(+) = ADP-riboxanated L-argininyl-[protein] + nicotinamide + NH4(+) + H(+). ADP-riboxanase effector that mediates arginine ADP-riboxanation of host caspase CASP4/CASP11, thereby inhibiting pyroptosis. The protein is Arginine ADP-riboxanase OspC4 of Shigella flexneri.